Here is a 490-residue protein sequence, read N- to C-terminus: Tektin-3 (490 aa).

Residues threonine 7 and threonine 9 are each glycosylated (O-linked (GalNAc...) threonine). Asparagine 41, asparagine 86, asparagine 111, and asparagine 276 each carry an N-linked (GlcNAc...) asparagine glycan. A coiled-coil region spans residues 419 to 456 (RLVNEVYEVDETIQTLQQRLRDSEDTLQSLAHTKATLE).

Belongs to the tektin family. As to quaternary structure, microtubule inner protein component of sperm flagellar doublet microtubules. Interacts with TEKT1, TEKT2, TEKT4 and TEKT5. Interacts with CCDC38. In terms of processing, N- and O-glycosylated. Post-translationally, may be proteolytically processed during the epididymal transit of spermatozoa. Ubiquitinated, leading to its degradation. Deubiquitinated by USP16, promoting its stability. Expressed in epididymal sperm (at protein level).

The protein localises to the cytoplasm. It is found in the cytoskeleton. It localises to the cilium axoneme. The protein resides in the flagellum axoneme. Its subcellular location is the cytoplasmic vesicle. The protein localises to the secretory vesicle. It is found in the acrosome outer membrane. Functionally, microtubule inner protein (MIP) part of the dynein-decorated doublet microtubules (DMTs) in cilia and flagellar axoneme. Forms filamentous polymers in the walls of ciliary and flagellar microtubules. Required for normal sperm mobility. This is Tektin-3 (Tekt3) from Rattus norvegicus (Rat).